A 290-amino-acid polypeptide reads, in one-letter code: Signal recognition particle receptor FtsY (290 aa).

GTP contacts are provided by residues 91–98, 173–177, and 237–240; these read GTNGSGKT, DTSGR, and TKVD.

Belongs to the GTP-binding SRP family. FtsY subfamily. Part of the signal recognition particle protein translocation system, which is composed of SRP and FtsY.

The protein localises to the cell inner membrane. It localises to the cytoplasm. The catalysed reaction is GTP + H2O = GDP + phosphate + H(+). Its function is as follows. Involved in targeting and insertion of nascent membrane proteins into the cytoplasmic membrane. Acts as a receptor for the complex formed by the signal recognition particle (SRP) and the ribosome-nascent chain (RNC). This Chlamydia pneumoniae (Chlamydophila pneumoniae) protein is Signal recognition particle receptor FtsY.